The chain runs to 317 residues: Large ribosomal subunit protein uL10z (317 aa).

It belongs to the universal ribosomal protein uL10 family. P0 forms a pentameric complex by interaction with dimers of P1 and P2. In terms of processing, phosphorylated.

In terms of biological role, ribosomal protein P0 is the functional equivalent of E.coli protein L10. The sequence is that of Large ribosomal subunit protein uL10z (RPP0A) from Arabidopsis thaliana (Mouse-ear cress).